Consider the following 197-residue polypeptide: Outer membrane protein 26 (197 aa).

An N-terminal signal peptide occupies residues 1–23 (MKNIAKVTALALGIALASGYASA).

This sequence belongs to the Skp family.

The protein resides in the cell outer membrane. This is Outer membrane protein 26 (omp26) from Haemophilus influenzae (strain ATCC 51907 / DSM 11121 / KW20 / Rd).